A 276-amino-acid polypeptide reads, in one-letter code: Diaminopimelate epimerase (276 aa).

3 residues coordinate substrate: asparagine 13, glutamine 46, and asparagine 66. Cysteine 75 (proton donor) is an active-site residue. Substrate contacts are provided by residues 76-77, asparagine 159, asparagine 192, and 210-211; these read GN and ER. Cysteine 219 (proton acceptor) is an active-site residue. 220–221 provides a ligand contact to substrate; the sequence is GS.

Belongs to the diaminopimelate epimerase family. In terms of assembly, homodimer.

The protein localises to the cytoplasm. It carries out the reaction (2S,6S)-2,6-diaminopimelate = meso-2,6-diaminopimelate. It participates in amino-acid biosynthesis; L-lysine biosynthesis via DAP pathway; DL-2,6-diaminopimelate from LL-2,6-diaminopimelate: step 1/1. Functionally, catalyzes the stereoinversion of LL-2,6-diaminopimelate (L,L-DAP) to meso-diaminopimelate (meso-DAP), a precursor of L-lysine and an essential component of the bacterial peptidoglycan. The sequence is that of Diaminopimelate epimerase from Coxiella burnetii (strain CbuK_Q154) (Coxiella burnetii (strain Q154)).